A 195-amino-acid chain; its full sequence is Imidazoleglycerol-phosphate dehydratase (195 aa).

It belongs to the imidazoleglycerol-phosphate dehydratase family.

Its subcellular location is the cytoplasm. It catalyses the reaction D-erythro-1-(imidazol-4-yl)glycerol 3-phosphate = 3-(imidazol-4-yl)-2-oxopropyl phosphate + H2O. The protein operates within amino-acid biosynthesis; L-histidine biosynthesis; L-histidine from 5-phospho-alpha-D-ribose 1-diphosphate: step 6/9. This is Imidazoleglycerol-phosphate dehydratase from Methylobacterium radiotolerans (strain ATCC 27329 / DSM 1819 / JCM 2831 / NBRC 15690 / NCIMB 10815 / 0-1).